Consider the following 237-residue polypeptide: (5-formylfuran-3-yl)methyl phosphate synthase (237 aa).

Lysine 29 acts as the Schiff-base intermediate with substrate in catalysis. The Proton acceptor role is filled by lysine 87.

It belongs to the MfnB family.

The catalysed reaction is 2 D-glyceraldehyde 3-phosphate = 4-(hydroxymethyl)-2-furancarboxaldehyde phosphate + phosphate + 2 H2O. The protein operates within cofactor biosynthesis; methanofuran biosynthesis. Its function is as follows. Catalyzes the formation of 4-(hydroxymethyl)-2-furancarboxaldehyde phosphate (4-HFC-P) from two molecules of glyceraldehyde-3-P (GA-3-P). The chain is (5-formylfuran-3-yl)methyl phosphate synthase from Methanopyrus kandleri (strain AV19 / DSM 6324 / JCM 9639 / NBRC 100938).